The chain runs to 364 residues: Succinyl-diaminopimelate desuccinylase (364 aa).

A Zn(2+)-binding site is contributed by His66. Asp68 is an active-site residue. Asp97 is a binding site for Zn(2+). The active-site Proton acceptor is the Glu127. Residues Glu128, Glu156, and His341 each contribute to the Zn(2+) site.

The protein belongs to the peptidase M20A family. DapE subfamily. As to quaternary structure, homodimer. Zn(2+) serves as cofactor. It depends on Co(2+) as a cofactor.

It catalyses the reaction N-succinyl-(2S,6S)-2,6-diaminopimelate + H2O = (2S,6S)-2,6-diaminopimelate + succinate. The protein operates within amino-acid biosynthesis; L-lysine biosynthesis via DAP pathway; LL-2,6-diaminopimelate from (S)-tetrahydrodipicolinate (succinylase route): step 3/3. Functionally, catalyzes the hydrolysis of N-succinyl-L,L-diaminopimelic acid (SDAP), forming succinate and LL-2,6-diaminopimelate (DAP), an intermediate involved in the bacterial biosynthesis of lysine and meso-diaminopimelic acid, an essential component of bacterial cell walls. This Wolinella succinogenes (strain ATCC 29543 / DSM 1740 / CCUG 13145 / JCM 31913 / LMG 7466 / NCTC 11488 / FDC 602W) (Vibrio succinogenes) protein is Succinyl-diaminopimelate desuccinylase.